Here is a 280-residue protein sequence, read N- to C-terminus: Aspartate/glutamate leucyltransferase (280 aa).

This sequence belongs to the R-transferase family. Bpt subfamily.

It localises to the cytoplasm. It carries out the reaction N-terminal L-glutamyl-[protein] + L-leucyl-tRNA(Leu) = N-terminal L-leucyl-L-glutamyl-[protein] + tRNA(Leu) + H(+). It catalyses the reaction N-terminal L-aspartyl-[protein] + L-leucyl-tRNA(Leu) = N-terminal L-leucyl-L-aspartyl-[protein] + tRNA(Leu) + H(+). In terms of biological role, functions in the N-end rule pathway of protein degradation where it conjugates Leu from its aminoacyl-tRNA to the N-termini of proteins containing an N-terminal aspartate or glutamate. This is Aspartate/glutamate leucyltransferase from Cereibacter sphaeroides (strain ATCC 17023 / DSM 158 / JCM 6121 / CCUG 31486 / LMG 2827 / NBRC 12203 / NCIMB 8253 / ATH 2.4.1.) (Rhodobacter sphaeroides).